The sequence spans 122 residues: Ribonuclease P protein component (122 aa).

The protein belongs to the RnpA family. In terms of assembly, consists of a catalytic RNA component (M1 or rnpB) and a protein subunit.

The catalysed reaction is Endonucleolytic cleavage of RNA, removing 5'-extranucleotides from tRNA precursor.. In terms of biological role, RNaseP catalyzes the removal of the 5'-leader sequence from pre-tRNA to produce the mature 5'-terminus. It can also cleave other RNA substrates such as 4.5S RNA. The protein component plays an auxiliary but essential role in vivo by binding to the 5'-leader sequence and broadening the substrate specificity of the ribozyme. The polypeptide is Ribonuclease P protein component (Lactobacillus johnsonii (strain CNCM I-12250 / La1 / NCC 533)).